The primary structure comprises 418 residues: Sterigmatocystin 8-O-methyltransferase (418 aa).

Residues Met1–Glu41 constitute a propeptide that is removed on maturation. A substrate-binding site is contributed by Met170–Phe176. The segment at Leu206–Met225 is substrate binding. S-adenosyl-L-methionine contacts are provided by residues Gly254–Gly255, Asp277, Asp297–Ile298, and Arg313. His317 serves as the catalytic Proton acceptor.

Belongs to the class I-like SAM-binding methyltransferase superfamily. Cation-independent O-methyltransferase family. COMT subfamily.

It carries out the reaction sterigmatocystin + S-adenosyl-L-methionine = 8-O-methylsterigmatocystin + S-adenosyl-L-homocysteine + H(+). The catalysed reaction is dihydrosterigmatocystin + S-adenosyl-L-methionine = 8-O-methyldihydrosterigmatocystin + S-adenosyl-L-homocysteine + H(+). It functions in the pathway mycotoxin biosynthesis; aflatoxin biosynthesis. Functionally, involved in the conversion of sterigmatocystin to O-methylsterigmatocystin (OMST) and dihydrosterigmatocystin to dihydro-o-methylsterigmatocystin in the aflatoxin biosynthesis pathway. In Aspergillus flavus (strain ATCC 200026 / FGSC A1120 / IAM 13836 / NRRL 3357 / JCM 12722 / SRRC 167), this protein is Sterigmatocystin 8-O-methyltransferase (omtA).